Reading from the N-terminus, the 294-residue chain is Endolytic peptidoglycan transglycosylase RlpA (294 aa).

A signal peptide spans 1–23 (MKQKIFQILTALCCIFYVMSAQA). Residues 216 to 291 (EKYTTVYKIR…NYSKPLIVYT (76 aa)) form the SPOR domain.

It belongs to the RlpA family.

Functionally, lytic transglycosylase with a strong preference for naked glycan strands that lack stem peptides. The sequence is that of Endolytic peptidoglycan transglycosylase RlpA from Pasteurella multocida (strain Pm70).